The primary structure comprises 456 residues: ATP synthase subunit beta 1 (456 aa).

An ATP-binding site is contributed by 152-159 (GGAGVGKS).

The protein belongs to the ATPase alpha/beta chains family. In terms of assembly, F-type ATPases have 2 components, CF(1) - the catalytic core - and CF(0) - the membrane proton channel. CF(1) has five subunits: alpha(3), beta(3), gamma(1), delta(1), epsilon(1). CF(0) has three main subunits: a(1), b(2) and c(9-12). The alpha and beta chains form an alternating ring which encloses part of the gamma chain. CF(1) is attached to CF(0) by a central stalk formed by the gamma and epsilon chains, while a peripheral stalk is formed by the delta and b chains.

Its subcellular location is the cell membrane. It catalyses the reaction ATP + H2O + 4 H(+)(in) = ADP + phosphate + 5 H(+)(out). In terms of biological role, produces ATP from ADP in the presence of a proton gradient across the membrane. The catalytic sites are hosted primarily by the beta subunits. This is ATP synthase subunit beta 1 from Listeria monocytogenes serovar 1/2a (strain ATCC BAA-679 / EGD-e).